Consider the following 449-residue polypeptide: Heterogeneous nuclear ribonucleoprotein H (449 aa).

Residue Met1 is modified to N-acetylmethionine; in Heterogeneous nuclear ribonucleoprotein H; alternate. Met2 carries the post-translational modification N-acetylmethionine; in Heterogeneous nuclear ribonucleoprotein H, N-terminally processed. Residues 11 to 90 (FVVKVRGLPW…RYVEVFKSNN (80 aa)) form the RRM 1 domain. Ser23 carries the phosphoserine modification. Lys35 participates in a covalent cross-link: Glycyl lysine isopeptide (Lys-Gly) (interchain with G-Cter in SUMO2). A phosphoserine mark is found at Ser54 and Ser63. Residues Lys87 and Lys98 each participate in a glycyl lysine isopeptide (Lys-Gly) (interchain with G-Cter in SUMO2) cross-link. An RRM 2 domain is found at 111 to 188 (GFVRLRGLPF…RYIEIFKSSR (78 aa)). Arg233 carries the post-translational modification Dimethylated arginine; alternate. Arg233 is subject to Omega-N-methylarginine; alternate. The 1-1 repeat unit spans residues 234–249 (GAYGGGYGGYDDYNGY). Residues 234–433 (GAYGGGYGGY…YGGQSSMSGY (200 aa)) form a 2 X 16 AA Gly-rich approximate repeats region. A Phosphotyrosine modification is found at Tyr246. Positions 289 to 364 (HCVHMRGLPY…RYVELFLNST (76 aa)) constitute an RRM 3 domain. Ser310 is modified (phosphoserine). Repeat copies occupy residues 354–372 (HRYVELFLNSTAGASGGAY), 374–392 (HRYVELFLNSTAGASGGAY), and 418–433 (GGYGGGYGGQSSMSGY). The interval 354–392 (HRYVELFLNSTAGASGGAYEHRYVELFLNSTAGASGGAY) is 2 X 19 AA perfect repeats.

As to quaternary structure, part of a ternary complex containing FUBP2, PTBP1, PTBP2 and HNRNPH1. Identified in the spliceosome C complex. Interacts with IGF2BP1. Interacts with CUGBP1; the interaction is RNA-dependent. Interacts with MBNL1; the interaction in RNA-independent. Expressed ubiquitously.

The protein localises to the nucleus. It is found in the nucleoplasm. In terms of biological role, this protein is a component of the heterogeneous nuclear ribonucleoprotein (hnRNP) complexes which provide the substrate for the processing events that pre-mRNAs undergo before becoming functional, translatable mRNAs in the cytoplasm. Mediates pre-mRNA alternative splicing regulation. Inhibits, together with CUGBP1, insulin receptor (IR) pre-mRNA exon 11 inclusion in myoblast. Binds to the IR RNA. Binds poly(RG). The protein is Heterogeneous nuclear ribonucleoprotein H (HNRNPH1) of Homo sapiens (Human).